The sequence spans 71 residues: Exodeoxyribonuclease 7 small subunit (71 aa).

This sequence belongs to the XseB family. In terms of assembly, heterooligomer composed of large and small subunits.

The protein localises to the cytoplasm. It catalyses the reaction Exonucleolytic cleavage in either 5'- to 3'- or 3'- to 5'-direction to yield nucleoside 5'-phosphates.. Bidirectionally degrades single-stranded DNA into large acid-insoluble oligonucleotides, which are then degraded further into small acid-soluble oligonucleotides. The polypeptide is Exodeoxyribonuclease 7 small subunit (Streptococcus suis (strain 98HAH33)).